Here is a 430-residue protein sequence, read N- to C-terminus: Enolase (430 aa).

Q166 provides a ligand contact to (2R)-2-phosphoglycerate. The active-site Proton donor is E208. Mg(2+)-binding residues include D245, E288, and D315. (2R)-2-phosphoglycerate is bound by residues K340, R369, S370, and K391. The active-site Proton acceptor is the K340.

It belongs to the enolase family. Requires Mg(2+) as cofactor.

Its subcellular location is the cytoplasm. It localises to the secreted. It is found in the cell surface. It carries out the reaction (2R)-2-phosphoglycerate = phosphoenolpyruvate + H2O. Its pathway is carbohydrate degradation; glycolysis; pyruvate from D-glyceraldehyde 3-phosphate: step 4/5. Functionally, catalyzes the reversible conversion of 2-phosphoglycerate (2-PG) into phosphoenolpyruvate (PEP). It is essential for the degradation of carbohydrates via glycolysis. This is Enolase from Clostridium kluyveri (strain NBRC 12016).